The primary structure comprises 254 residues: Translation initiation factor 2 subunit alpha (254 aa).

Positions 10–81 (GDLVVVKITE…ERKNVDLSLK (72 aa)) constitute an S1 motif domain.

Belongs to the eIF-2-alpha family. As to quaternary structure, heterotrimer composed of an alpha, a beta and a gamma chain.

In terms of biological role, eIF-2 functions in the early steps of protein synthesis by forming a ternary complex with GTP and initiator tRNA. In Thermoplasma volcanium (strain ATCC 51530 / DSM 4299 / JCM 9571 / NBRC 15438 / GSS1), this protein is Translation initiation factor 2 subunit alpha.